Here is a 76-residue protein sequence, read N- to C-terminus: Small ribosomal subunit protein bS18 (76 aa).

The protein belongs to the bacterial ribosomal protein bS18 family. As to quaternary structure, part of the 30S ribosomal subunit. Forms a tight heterodimer with protein bS6.

Binds as a heterodimer with protein bS6 to the central domain of the 16S rRNA, where it helps stabilize the platform of the 30S subunit. The protein is Small ribosomal subunit protein bS18 of Alcanivorax borkumensis (strain ATCC 700651 / DSM 11573 / NCIMB 13689 / SK2).